Reading from the N-terminus, the 870-residue chain is Ubiquitin-protein ligase E3A (870 aa).

S8 bears the Phosphoserine mark. The C4-type; atypical zinc finger occupies 42-81 (CGNEACTNEFCASCPTFLRMDNNAAAIKALELYKINAKLC). The span at 171–180 (EELKSLQEKD) shows a compositional bias: basic and acidic residues. Positions 171-223 (EELKSLQEKDEDKDEDEKEKAACSAAAMEEDSEASSSRMGDSSQGDNNVQKLG) are disordered. Positions 208 to 220 (RMGDSSQGDNNVQ) are enriched in polar residues. S213 carries the post-translational modification Phosphoserine. The 329-residue stretch at 542–870 (NPADLKKQLY…ITYAKGFGML (329 aa)) folds into the HECT domain. A Phosphotyrosine; by ABL1 modification is found at Y654. C838 acts as the Glycyl thioester intermediate in catalysis.

The active form is probably a homotrimer. Binds UBQLN1 and UBQLN2. Interacts with the 26S proteasome. Interacts with BPY2. Interacts with HIF1AN, MAPK6 and NEURL4; interaction with MAPK6 may be mediated by NEURL4. Interacts with the proteasomal subunit PSMD4. Interacts with BMAL1. Interacts with ARC. Interacts with ESR1 and WBP2. Phosphorylation at Tyr-654 by ABL1 impairs E3 ligase activity. As to expression, widely expressed. Most abundant in brain, heart and thymus.

The protein resides in the cytoplasm. It is found in the nucleus. It carries out the reaction S-ubiquitinyl-[E2 ubiquitin-conjugating enzyme]-L-cysteine + [acceptor protein]-L-lysine = [E2 ubiquitin-conjugating enzyme]-L-cysteine + N(6)-ubiquitinyl-[acceptor protein]-L-lysine.. It functions in the pathway protein modification; protein ubiquitination. Its function is as follows. E3 ubiquitin-protein ligase which accepts ubiquitin from an E2 ubiquitin-conjugating enzyme in the form of a thioester and transfers it to its substrates. Several substrates have been identified including the BMAL1, ARC, LAMTOR1, RAD23A and RAD23B, MCM7 (which is involved in DNA replication), annexin A1, the PML tumor suppressor, and the cell cycle regulator CDKN1B. Additionally, may function as a cellular quality control ubiquitin ligase by helping the degradation of the cytoplasmic misfolded proteins. Finally, UBE3A also promotes its own degradation in vivo. Plays an important role in the regulation of the circadian clock: involved in the ubiquitination of the core clock component BMAL1, leading to its proteasomal degradation. Acts as a regulator of synaptic development by mediating ubiquitination and degradation of ARC. Required for synaptic remodeling in neurons by mediating ubiquitination and degradation of LAMTOR1, thereby limiting mTORC1 signaling and activity-dependent synaptic remodeling. Synergizes with WBP2 in enhancing PGR activity. The chain is Ubiquitin-protein ligase E3A from Mus musculus (Mouse).